Here is an 833-residue protein sequence, read N- to C-terminus: Leucine--tRNA ligase (833 aa).

The short motif at 41–52 (PYPSGAGLHVGH) is the 'HIGH' region element. A 'KMSKS' region motif is present at residues 610–614 (KMSKS). Position 613 (lysine 613) interacts with ATP.

Belongs to the class-I aminoacyl-tRNA synthetase family.

The protein resides in the cytoplasm. It carries out the reaction tRNA(Leu) + L-leucine + ATP = L-leucyl-tRNA(Leu) + AMP + diphosphate. The protein is Leucine--tRNA ligase of Streptococcus equi subsp. zooepidemicus (strain MGCS10565).